A 498-amino-acid chain; its full sequence is Angiopoietin-1 (498 aa).

Positions 1 to 19 (MTVFLSFAFLAAILTHIGC) are cleaved as a signal peptide. N-linked (GlcNAc...) asparagine glycans are attached at residues Asn92, Asn122, Asn154, Asn243, and Asn295. The stretch at 158 to 254 (RLEIQLLENS…SVLQKQQLEL (97 aa)) forms a coiled coil. In terms of domain architecture, Fibrinogen C-terminal spans 277–497 (KEEVKPFRDC…STTMMIRPLD (221 aa)). 2 disulfides stabilise this stretch: Cys286/Cys315 and Cys439/Cys452.

As to quaternary structure, homooligomer. Interacts with TEK/TIE2. Interacts with SVEP1/polydom. Interacts with THBD; this interaction significantly inhibits the generation of activated PC and TAFIa/CPB2 by the thrombin/thrombomodulin complex.

The protein localises to the secreted. Binds and activates TIE2 receptor by inducing its tyrosine phosphorylation. Implicated in endothelial developmental processes later and distinct from that of VEGF. Appears to play a crucial role in mediating reciprocal interactions between the endothelium and surrounding matrix and mesenchyme. Mediates blood vessel maturation/stability. It may play an important role in the heart early development. This Sus scrofa (Pig) protein is Angiopoietin-1 (ANGPT1).